A 563-amino-acid polypeptide reads, in one-letter code: Arginine--tRNA ligase (563 aa).

Residues Pro121–His131 carry the 'HIGH' region motif.

Belongs to the class-I aminoacyl-tRNA synthetase family. As to quaternary structure, monomer.

It localises to the cytoplasm. It carries out the reaction tRNA(Arg) + L-arginine + ATP = L-arginyl-tRNA(Arg) + AMP + diphosphate. In Streptococcus thermophilus (strain CNRZ 1066), this protein is Arginine--tRNA ligase.